Here is a 679-residue protein sequence, read N- to C-terminus: MTKNLLVELGLEEMPAYVVKPSIKQLRQKMGQFLETNRLSFEKIEMFSTPRRLAIRVVHLADQQSDYSEDFKGPAKKIALDADGHFTKAAQGFVRGKGLTTDAIEFREVKGEEYVYVTKNEAGKPAKEVLGGLIDVLQSLTFPVNMHWANHTFEYIRPVHTLVVLLDDEALDLNFLDIKSGRISRGHRFLGQETQIASAASYETDLRAEFVIADAKEREDMIIEQIREIEKTYNVSVEIDEALLSEVLNLVEYPTAFMGSFDEKYLELPEEVLVTSMKTHQRYFVVRDQTGKLLPNFISVRNGNEQFIENVVKGNEKVLLARLEDGEFFWREDQRLQIADLVEKLKLVTFHEKIGSLYEHMMRTKQIAAYLAEQADLTDQEKAEIERAASIYKFDLLTGMVGEFDELQGIMGEKYATLAGESQAVATAVREHYLPISSDGQLPDSKVGAILAVADKLDTLLSFFSVGLIPSGSNDPYALRRATQGIVRILDKFGWEIPLDRLVANLYQFDFDSLTYQNQADVLAFIRGRVEKMIDKSVPKDIREAVLDSSTHIVRLEVEAAAALAEKADEDHFKASIESLSRVFNLAEKSNHNEMVDTSIFENEYEQELFDAVEELHFTEDMTDNVDRLFVLSPIIDAFFDNTMVMVDDEAVKKNRLNLLDRLAQKANTIAAFNEIRTK.

It belongs to the class-II aminoacyl-tRNA synthetase family. In terms of assembly, tetramer of two alpha and two beta subunits.

The protein resides in the cytoplasm. The catalysed reaction is tRNA(Gly) + glycine + ATP = glycyl-tRNA(Gly) + AMP + diphosphate. In Streptococcus mutans serotype c (strain ATCC 700610 / UA159), this protein is Glycine--tRNA ligase beta subunit.